Consider the following 166-residue polypeptide: Ferric nitrobindin-like protein (166 aa).

Residues glycine 21–glycine 27 carry the GXWXGXG motif.

The protein belongs to the nitrobindin family.

This chain is Ferric nitrobindin-like protein, found in Cutibacterium acnes (strain DSM 16379 / KPA171202) (Propionibacterium acnes).